A 284-amino-acid polypeptide reads, in one-letter code: Cystinosin homolog (284 aa).

Transmembrane regions (helical) follow at residues 3–23 (ALSI…SLSF), 37–57 (IGLS…YSVF), 86–106 (IAFA…CFIY), 116–136 (LGIG…ILGF), 139–159 (VFTW…ITFI), 181–201 (NVLL…LDVA), and 216–236 (LGLS…HYIL). A PQ-loop 1 domain is found at 4–70 (LSIISIIIGW…LYFDKLVKNE (67 aa)). The PQ-loop 2 domain occupies 154 to 208 (LFITFIKYIPQAYLNFKNKSTSGWSVHNVLLDFSGGVLSLLQMFLDVADSGNWNI). Residues 247–269 (NLNDNNIPNNNNNNNNNINNNTP) form a disordered region.

The protein belongs to the cystinosin family.

Its subcellular location is the lysosome membrane. It carries out the reaction L-cystine(out) + H(+)(out) = L-cystine(in) + H(+)(in). Cystine/H(+) symporter that mediates export of cystine, the oxidized dimer of cysteine, from lysosomes. The sequence is that of Cystinosin homolog (ctns) from Dictyostelium discoideum (Social amoeba).